Consider the following 396-residue polypeptide: Inositol polyphosphate 1-phosphatase (396 aa).

Asp54 lines the Li(+) pocket. Mg(2+) is bound at residue Glu79. Position 80 (Glu80) interacts with Li(+). Positions 153 and 155 each coordinate Mg(2+). 1D-myo-inositol 1,4-bisphosphate is bound by residues Asp156, Ser157, Thr158, Ser264, Lys266, Gly286, Ala287, Lys290, and Thr308. Residue Asp313 coordinates Mg(2+). Residue Ser314 is modified to Phosphoserine.

This sequence belongs to the inositol monophosphatase superfamily. As to quaternary structure, monomer. Requires Mg(2+) as cofactor.

It catalyses the reaction 1D-myo-inositol 1,4-bisphosphate + H2O = 1D-myo-inositol 4-phosphate + phosphate. The catalysed reaction is 1D-myo-inositol 1,3,4-trisphosphate + H2O = 1D-myo-inositol 3,4-bisphosphate + phosphate. It participates in signal transduction; phosphatidylinositol signaling pathway. Inhibited by Li(+). Its function is as follows. Mg(2+)-dependent phosphatase that catalyzes the hydrolysis of the 1-position phosphate from inositol 1,4-bisphosphate and inositol 1,3,4-trisphosphate and participates in inositol phosphate metabolism. The sequence is that of Inositol polyphosphate 1-phosphatase from Mus musculus (Mouse).